A 179-amino-acid polypeptide reads, in one-letter code: Inner membrane-spanning protein YciB (179 aa).

5 helical membrane-spanning segments follow: residues 22 to 42 (IYAA…YSWV), 50 to 70 (MALI…FFHN), 76 to 96 (WKVT…QWVM), 121 to 141 (LAWA…AFWL), and 149 to 169 (FKVF…GIYI).

It belongs to the YciB family.

The protein resides in the cell inner membrane. In terms of biological role, plays a role in cell envelope biogenesis, maintenance of cell envelope integrity and membrane homeostasis. This is Inner membrane-spanning protein YciB from Klebsiella pneumoniae (strain 342).